A 138-amino-acid polypeptide reads, in one-letter code: Small ribosomal subunit protein uS11 (138 aa).

The segment covering 1 to 12 (MAQAKKGGTAAK) has biased composition (low complexity). 2 disordered regions span residues 1-32 (MAQAKKGGTAAKKGQKTRRREKKNVPHGAAHI) and 119-138 (ISDVTPQPHNGCRPPKRRRV). The segment covering 13-22 (KGQKTRRREK) has biased composition (basic residues).

Belongs to the universal ribosomal protein uS11 family. In terms of assembly, part of the 30S ribosomal subunit. Interacts with proteins S7 and S18. Binds to IF-3.

In terms of biological role, located on the platform of the 30S subunit, it bridges several disparate RNA helices of the 16S rRNA. Forms part of the Shine-Dalgarno cleft in the 70S ribosome. In Mycolicibacterium smegmatis (strain ATCC 700084 / mc(2)155) (Mycobacterium smegmatis), this protein is Small ribosomal subunit protein uS11.